Here is a 307-residue protein sequence, read N- to C-terminus: Nucleotide-binding protein AAur_2084 (307 aa).

Residues 1-21 (MDEATAKSGTEQDGLTPVKPP) form a disordered region. 30 to 37 (GMSGAGRS) is a binding site for ATP. 81 to 84 (DVRS) contacts GTP.

This sequence belongs to the RapZ-like family.

Displays ATPase and GTPase activities. In Paenarthrobacter aurescens (strain TC1), this protein is Nucleotide-binding protein AAur_2084.